The primary structure comprises 498 residues: Glycerol kinase (498 aa).

Thr-12 is an ADP binding site. The ATP site is built by Thr-12, Thr-13, and Ser-14. A sn-glycerol 3-phosphate-binding site is contributed by Thr-12. Residue Arg-16 participates in ADP binding. Residues Arg-82, Glu-83, and Tyr-134 each contribute to the sn-glycerol 3-phosphate site. Glycerol contacts are provided by Arg-82, Glu-83, and Tyr-134. His-230 bears the Phosphohistidine; by HPr mark. Residue Asp-244 participates in sn-glycerol 3-phosphate binding. The glycerol site is built by Asp-244 and Gln-245. The ADP site is built by Thr-266 and Gly-309. ATP contacts are provided by Thr-266, Gly-309, Gln-313, and Gly-410. Positions 410 and 414 each coordinate ADP.

Belongs to the FGGY kinase family. Homotetramer and homodimer (in equilibrium). The phosphoenolpyruvate-dependent sugar phosphotransferase system (PTS), including enzyme I, and histidine-containing protein (HPr) are required for the phosphorylation, which leads to the activation of the enzyme.

It carries out the reaction glycerol + ATP = sn-glycerol 3-phosphate + ADP + H(+). The protein operates within polyol metabolism; glycerol degradation via glycerol kinase pathway; sn-glycerol 3-phosphate from glycerol: step 1/1. Its activity is regulated as follows. Activated by phosphorylation and inhibited by fructose 1,6-bisphosphate (FBP). Key enzyme in the regulation of glycerol uptake and metabolism. Catalyzes the phosphorylation of glycerol to yield sn-glycerol 3-phosphate. In Staphylococcus aureus (strain bovine RF122 / ET3-1), this protein is Glycerol kinase.